A 724-amino-acid polypeptide reads, in one-letter code: Ribosomal RNA large subunit methyltransferase K/L (724 aa).

Residues 42–153 (DAQRLVLWSR…KGRATLSVDL (112 aa)) form the THUMP domain.

It belongs to the methyltransferase superfamily. RlmKL family.

It is found in the cytoplasm. It carries out the reaction guanosine(2445) in 23S rRNA + S-adenosyl-L-methionine = N(2)-methylguanosine(2445) in 23S rRNA + S-adenosyl-L-homocysteine + H(+). The catalysed reaction is guanosine(2069) in 23S rRNA + S-adenosyl-L-methionine = N(2)-methylguanosine(2069) in 23S rRNA + S-adenosyl-L-homocysteine + H(+). In terms of biological role, specifically methylates the guanine in position 2445 (m2G2445) and the guanine in position 2069 (m7G2069) of 23S rRNA. The sequence is that of Ribosomal RNA large subunit methyltransferase K/L from Xylella fastidiosa (strain M12).